The sequence spans 523 residues: MFS-type transporter R5 (523 aa).

The segment at 19–42 (QLNEATAQRESATNNPNDSSSIDE) is disordered. Over residues 21–38 (NEATAQRESATNNPNDSS) the composition is skewed to polar residues. N-linked (GlcNAc...) asparagine glycans are attached at residues N35, N94, and N143. The next 2 helical transmembrane spans lie at 183 to 203 (AYLT…GGLL) and 211 to 231 (AIFW…FTFF). N-linked (GlcNAc...) asparagine glycosylation is found at N235 and N250. A run of 6 helical transmembrane segments spans residues 291 to 311 (FIVC…ISIF), 319 to 339 (YGYS…GSIL), 381 to 401 (LTIS…YGWL), 408 to 428 (VASV…VLIA), 443 to 463 (ALGA…VAAV), and 470 to 490 (IGIG…LPAL).

It belongs to the major facilitator superfamily.

The protein resides in the membrane. MFS-type transporter; part of the gene cluster that mediates the biosynthesis of squalestatin S1 (SQS1, also known as zaragozic acid A), a heavily oxidized fungal polyketide that offers potent cholesterol lowering activity by targeting squalene synthase (SS). In Phoma sp. (strain ATCC 20986 / MF5453), this protein is MFS-type transporter R5.